Consider the following 344-residue polypeptide: Adenosine kinase (344 aa).

The active site involves aspartate 298.

This sequence belongs to the carbohydrate kinase PfkB family. It depends on Mg(2+) as a cofactor.

It carries out the reaction adenosine + ATP = AMP + ADP + H(+). The protein operates within purine metabolism; AMP biosynthesis via salvage pathway; AMP from adenosine: step 1/1. The sequence is that of Adenosine kinase (ADK) from Schizophyllum commune (Split gill fungus).